A 234-amino-acid chain; its full sequence is Small ribosomal subunit protein uS3 (234 aa).

The KH type-2 domain occupies Ile39–Arg107. Over residues Gln215–Ala227 the composition is skewed to basic and acidic residues. Residues Gln215 to Ala234 are disordered.

It belongs to the universal ribosomal protein uS3 family. In terms of assembly, part of the 30S ribosomal subunit. Forms a tight complex with proteins S10 and S14.

Functionally, binds the lower part of the 30S subunit head. Binds mRNA in the 70S ribosome, positioning it for translation. In Maricaulis maris (strain MCS10) (Caulobacter maris), this protein is Small ribosomal subunit protein uS3.